Consider the following 742-residue polypeptide: Photosystem I P700 chlorophyll a apoprotein A2 (742 aa).

The next 8 helical transmembrane spans lie at 46-69, 135-158, 175-199, 273-291, 336-359, 375-401, 423-445, and 525-543; these read LFST…FHVA, LFQA…LHLQ, LNHH…HVAI, IAHH…GHMY, LHFQ…QHMG, SALY…IFFV, ALIS…IYVH, and FLVH…LILI. The [4Fe-4S] cluster site is built by Cys-567 and Cys-576. The next 2 helical transmembrane spans lie at 583–604 and 651–673; these read AMYL…YWHW and LSPW…MFLI. Residues His-662, Met-670, and Tyr-678 each coordinate divinyl chlorophyll a. Trp-679 contacts phylloquinone. The chain crosses the membrane as a helical span at residues 715–735; that stretch reads LVGLAHFTIGNILTFGAFVIA.

It belongs to the PsaA/PsaB family. The PsaA/B heterodimer binds the P700 divinyl chlorophyll special pair and subsequent electron acceptors. PSI consists of a core antenna complex that captures photons, and an electron transfer chain that converts photonic excitation into a charge separation. The cyanobacterial PSI reaction center is composed of one copy each of PsaA,B,C,D,E,F,I,J,K,L,M and X, and forms trimeric complexes. It depends on PSI electron transfer chain: 5 divinyl chlorophyll a, 1 divinyl chlorophyll a', 2 phylloquinones and 3 4Fe-4S clusters. PSI core antenna: 90 divinyl chlorophyll a, 22 carotenoids, 3 phospholipids and 1 galactolipid. P700 is a divinyl chlorophyll a/divinyl chlorophyll a' dimer, A0 is one or more divinyl chlorophyll a, A1 is one or both phylloquinones and FX is a shared 4Fe-4S iron-sulfur center. as a cofactor.

Its subcellular location is the cellular thylakoid membrane. The catalysed reaction is reduced [plastocyanin] + hnu + oxidized [2Fe-2S]-[ferredoxin] = oxidized [plastocyanin] + reduced [2Fe-2S]-[ferredoxin]. Functionally, psaA and PsaB bind P700, the primary electron donor of photosystem I (PSI), as well as the electron acceptors A0, A1 and FX. PSI is a plastocyanin/cytochrome c6-ferredoxin oxidoreductase, converting photonic excitation into a charge separation, which transfers an electron from the donor P700 chlorophyll pair to the spectroscopically characterized acceptors A0, A1, FX, FA and FB in turn. Oxidized P700 is reduced on the lumenal side of the thylakoid membrane by plastocyanin or cytochrome c6. This is Photosystem I P700 chlorophyll a apoprotein A2 from Prochlorococcus marinus (strain MIT 9312).